The chain runs to 461 residues: Argininosuccinate lyase (461 aa).

The protein belongs to the lyase 1 family. Argininosuccinate lyase subfamily.

It localises to the cytoplasm. The enzyme catalyses 2-(N(omega)-L-arginino)succinate = fumarate + L-arginine. Its pathway is amino-acid biosynthesis; L-arginine biosynthesis; L-arginine from L-ornithine and carbamoyl phosphate: step 3/3. This Chlorobium luteolum (strain DSM 273 / BCRC 81028 / 2530) (Pelodictyon luteolum) protein is Argininosuccinate lyase.